Consider the following 168-residue polypeptide: Secretory-abundant heat soluble protein 33020 (168 aa).

An N-terminal signal peptide occupies residues 1 to 19; sequence MARFLVALALFGVVAMTAA. The segment at 26 to 57 is SAHS-c1; it reads EWSGKPWLGKFVAEVSDKSENWEAFVDALGLP. The tract at residues 72-100 is SAHS-c2; that stretch reads YKQGEHYHHILSLPDKNINKDIEFTLGQE. Residues 113 to 162 are SAHS-c3; that stretch reads KYFEDGNKLVADVSIPAKGKSIHDVYDVQGDQLIKSYKVGDVVAKKWFKK.

It belongs to the Secretory-abundant heat soluble protein (SAHS) family.

It localises to the secreted. In terms of biological role, secreted heat soluble protein acting as a molecular shield in water-deficient condition. Tardigrade-specific intrinsically disordered proteins (TDPs) are essential for desiccation tolerance by forming non-crystalline amorphous solids upon desiccation, and this vitrified state mirrors their protective capabilities. This is Secretory-abundant heat soluble protein 33020 from Hypsibius exemplaris (Freshwater tardigrade).